A 66-amino-acid polypeptide reads, in one-letter code: FMRFamide-like neuropeptide 21 (66 aa).

An N-terminal signal peptide occupies residues 1-16; that stretch reads MRLFILLSCLLAWVLA.

Belongs to the FARP (FMRFamide related peptide) family. May be processed by convertase egl-3. As to expression, expressed in the ADL, ASE and ASH sensory neurons, the URA motor neurons and the MC, M2 and M4 pharyngeal neurons.

The protein resides in the secreted. Functionally, FMRFamide-like neuropeptide. Involved in modulating locomotion quiescence during the sleep-like state called lethargus which occurs during molting between larval and adult stages, acting via the G-protein coupled receptor npr-1. Plays a role in modulating social and feeding behavior. In terms of biological role, ligand to G-protein coupled receptor npr-1. The sequence is that of FMRFamide-like neuropeptide 21 from Caenorhabditis elegans.